The chain runs to 201 residues: ATP synthase subunit delta (201 aa).

This sequence belongs to the ATPase delta chain family. As to quaternary structure, F-type ATPases have 2 components, F(1) - the catalytic core - and F(0) - the membrane proton channel. F(1) has five subunits: alpha(3), beta(3), gamma(1), delta(1), epsilon(1). F(0) has three main subunits: a(1), b(2) and c(10-14). The alpha and beta chains form an alternating ring which encloses part of the gamma chain. F(1) is attached to F(0) by a central stalk formed by the gamma and epsilon chains, while a peripheral stalk is formed by the delta and b chains.

The protein localises to the cell inner membrane. Functionally, f(1)F(0) ATP synthase produces ATP from ADP in the presence of a proton or sodium gradient. F-type ATPases consist of two structural domains, F(1) containing the extramembraneous catalytic core and F(0) containing the membrane proton channel, linked together by a central stalk and a peripheral stalk. During catalysis, ATP synthesis in the catalytic domain of F(1) is coupled via a rotary mechanism of the central stalk subunits to proton translocation. In terms of biological role, this protein is part of the stalk that links CF(0) to CF(1). It either transmits conformational changes from CF(0) to CF(1) or is implicated in proton conduction. The polypeptide is ATP synthase subunit delta (Xanthobacter autotrophicus (strain ATCC BAA-1158 / Py2)).